A 178-amino-acid chain; its full sequence is Ribosome rescue factor SmrB (178 aa).

The Smr domain occupies 99–174 (LDLHGLTQMQ…GNAALLILIE (76 aa)).

Belongs to the SmrB family. Associates with collided ribosomes, but not with correctly translating polysomes.

Its function is as follows. Acts as a ribosome collision sensor. Detects stalled/collided disomes (pairs of ribosomes where the leading ribosome is stalled and a second ribosome has collided with it) and endonucleolytically cleaves mRNA at the 5' boundary of the stalled ribosome. Stalled/collided disomes form a new interface (primarily via the 30S subunits) that binds SmrB. Cleaved mRNA becomes available for tmRNA ligation, leading to ribosomal subunit dissociation and rescue of stalled ribosomes. The chain is Ribosome rescue factor SmrB from Photorhabdus laumondii subsp. laumondii (strain DSM 15139 / CIP 105565 / TT01) (Photorhabdus luminescens subsp. laumondii).